The following is a 601-amino-acid chain: Transcription factor Ken (601 aa).

Residues 33 to 101 (ADLTIVCENK…LYSGQTCITS (69 aa)) enclose the BTB domain. Disordered stretches follow at residues 188–276 (AAEC…TINP), 331–365 (LSDG…DNQP), and 471–491 (DHPE…AGSN). Composition is skewed to basic and acidic residues over residues 190-200 (ECERSGGHNNK) and 207-216 (CTHKDNKSDK). A compositionally biased stretch (polar residues) spans 223-234 (NLSNAPPSGTSG). Residues 235–247 (SNSNISTSSNHQQ) are compositionally biased toward low complexity. A compositionally biased stretch (basic residues) spans 248–258 (QQHHHHHHHNH). Low complexity predominate over residues 259–275 (NNNNNNNNNNSSSSTIN). The span at 476–490 (RSGSASGSGANLAGS) shows a compositional bias: low complexity. 3 consecutive C2H2-type zinc fingers follow at residues 500-522 (YRCE…LRVH), 528-551 (FACR…CSVH), and 567-590 (YSCC…SGHH).

Expressed from stage 5 in two rather faint stripes at positions of 64% (anterior domain; AD) and 17% (posterior domain; PD) egg length. During early gastrulation, at stage 6, these two stripes become more evident and detectable at the region posterior to the cephalic furrow and in the hindgut primordium. The AD disappears as gastrulation proceeds, while the PD remains. At stage 15, the AD appears again in the foregut, and PD expression in the hindgut and anal pad. In imaginal disks, it is ubiquitously expressed in both males and females in genital and eye-antennal disks. Not expressed in the brain. In genital disks, it is expressed along the margin of the anterior bulbus in males, while in females it is expressed in the posterior compartment along the anterior-posterior border, with medial expansion in the most posterior region.

The protein localises to the nucleus. Functionally, transcription factor required for terminalia development. Negative regulator of the JAK/STAT pathway: represses JAK/STAT-dependent expression of ventral veins lacking (vvl) in the posterior spiracles. This Drosophila melanogaster (Fruit fly) protein is Transcription factor Ken (ken).